Here is a 442-residue protein sequence, read N- to C-terminus: Serine--tRNA ligase (442 aa).

Position 249–251 (249–251 (TSE)) interacts with L-serine. 280 to 282 (RSE) provides a ligand contact to ATP. Glutamate 303 is an L-serine binding site. ATP is bound at residue 367-370 (EISS). An L-serine-binding site is contributed by serine 402.

The protein belongs to the class-II aminoacyl-tRNA synthetase family. Type-1 seryl-tRNA synthetase subfamily. Homodimer. The tRNA molecule binds across the dimer.

It localises to the cytoplasm. It carries out the reaction tRNA(Ser) + L-serine + ATP = L-seryl-tRNA(Ser) + AMP + diphosphate + H(+). The catalysed reaction is tRNA(Sec) + L-serine + ATP = L-seryl-tRNA(Sec) + AMP + diphosphate + H(+). It participates in aminoacyl-tRNA biosynthesis; selenocysteinyl-tRNA(Sec) biosynthesis; L-seryl-tRNA(Sec) from L-serine and tRNA(Sec): step 1/1. Functionally, catalyzes the attachment of serine to tRNA(Ser). Is also able to aminoacylate tRNA(Sec) with serine, to form the misacylated tRNA L-seryl-tRNA(Sec), which will be further converted into selenocysteinyl-tRNA(Sec). This Acidovorax sp. (strain JS42) protein is Serine--tRNA ligase.